The sequence spans 342 residues: S-adenosylmethionine:tRNA ribosyltransferase-isomerase (342 aa).

The protein belongs to the QueA family. In terms of assembly, monomer.

Its subcellular location is the cytoplasm. It catalyses the reaction 7-aminomethyl-7-carbaguanosine(34) in tRNA + S-adenosyl-L-methionine = epoxyqueuosine(34) in tRNA + adenine + L-methionine + 2 H(+). Its pathway is tRNA modification; tRNA-queuosine biosynthesis. Its function is as follows. Transfers and isomerizes the ribose moiety from AdoMet to the 7-aminomethyl group of 7-deazaguanine (preQ1-tRNA) to give epoxyqueuosine (oQ-tRNA). This chain is S-adenosylmethionine:tRNA ribosyltransferase-isomerase, found in Geobacillus sp. (strain WCH70).